A 652-amino-acid chain; its full sequence is DNA ligase (652 aa).

NAD(+) contacts are provided by residues 29–33 (DSDYD), 78–79 (SL), and E107. K109 serves as the catalytic N6-AMP-lysine intermediate. NAD(+)-binding residues include R130, E164, K278, and K302. Zn(2+) is bound by residues C395, C398, C413, and C418. Residues 577–652 (NSDAALFGLT…IEDEDWLRQL (76 aa)) enclose the BRCT domain.

Belongs to the NAD-dependent DNA ligase family. LigA subfamily. Requires Mg(2+) as cofactor. Mn(2+) is required as a cofactor.

The catalysed reaction is NAD(+) + (deoxyribonucleotide)n-3'-hydroxyl + 5'-phospho-(deoxyribonucleotide)m = (deoxyribonucleotide)n+m + AMP + beta-nicotinamide D-nucleotide.. DNA ligase that catalyzes the formation of phosphodiester linkages between 5'-phosphoryl and 3'-hydroxyl groups in double-stranded DNA using NAD as a coenzyme and as the energy source for the reaction. It is essential for DNA replication and repair of damaged DNA. The sequence is that of DNA ligase from Streptococcus pyogenes serotype M3 (strain ATCC BAA-595 / MGAS315).